The primary structure comprises 129 residues: 3-aminoacrylate deaminase RutC (129 aa).

It belongs to the RutC family.

The catalysed reaction is (Z)-3-aminoacrylate + H2O + H(+) = 3-oxopropanoate + NH4(+). Its function is as follows. Involved in pyrimidine catabolism. Catalyzes the deamination of 3-aminoacrylate to malonic semialdehyde, a reaction that can also occur spontaneously. RutC may facilitate the reaction and modulate the metabolic fitness, rather than catalyzing essential functions. This Caulobacter sp. (strain K31) protein is 3-aminoacrylate deaminase RutC.